The primary structure comprises 133 residues: Small ribosomal subunit protein uS8 (133 aa).

Belongs to the universal ribosomal protein uS8 family. In terms of assembly, part of the 30S ribosomal subunit. Contacts proteins S5 and S12.

In terms of biological role, one of the primary rRNA binding proteins, it binds directly to 16S rRNA central domain where it helps coordinate assembly of the platform of the 30S subunit. In Synechococcus elongatus (strain ATCC 33912 / PCC 7942 / FACHB-805) (Anacystis nidulans R2), this protein is Small ribosomal subunit protein uS8.